A 120-amino-acid polypeptide reads, in one-letter code: SAGA-associated factor 11 (120 aa).

Residues 40 to 60 are compositionally biased toward low complexity; it reads SLLNSSNSNTNSNTNGTIASN. Residues 40–82 form a disordered region; sequence SLLNSSNSNTNSNTNGTIASNGGNGTTSDENNEIENSTIQDKS. The SGF11-type zinc finger occupies 93–114; it reads FRCLNCGRNIAGGRFASHISKC.

Belongs to the SGF11 family. As to quaternary structure, component of the 1.8 MDa SAGA transcription coactivator-HAT complex. SAGA is built of 5 distinct domains with specialized functions. Within the SAGA complex, SUS1, SGF11, SGF73 and UBP8 form an additional subcomplex of SAGA called the DUB module (deubiquitination module). Interacts directly with SGF73, SUS1 and UBP8.

It is found in the nucleus. Its function is as follows. Functions as a component of the transcription regulatory histone acetylation (HAT) complex SAGA. At the promoters, SAGA is required for recruitment of the basal transcription machinery. It influences RNA polymerase II transcriptional activity through different activities such as TBP interaction and promoter selectivity, interaction with transcription activators, and chromatin modification through histone acetylation and deubiquitination. SAGA acetylates nucleosomal histone H3 to some extent (to form H3K9ac, H3K14ac, H3K18ac and H3K23ac). SAGA interacts with DNA via upstream activating sequences (UASs). Involved in transcriptional regulation of a subset of SAGA-regulated genes. Within the SAGA complex, participates in a subcomplex, that specifically deubiquitinates histones H2B. This Candida albicans (strain SC5314 / ATCC MYA-2876) (Yeast) protein is SAGA-associated factor 11.